The chain runs to 500 residues: Endothelial lipase (500 aa).

The N-terminal stretch at 1-20 (MRNTVFLLGFWSVYCYFPAG) is a signal peptide. A disulfide bond links Cys64 and Cys77. N-linked (GlcNAc...) asparagine glycans are attached at residues Asn65, Asn80, and Asn136. Residue Ser169 is the Nucleophile of the active site. Asp193 serves as the catalytic Charge relay system. A disulfide bridge links Cys252 with Cys272. The active-site Charge relay system is His274. 2 disulfides stabilise this stretch: Cys297/Cys316 and Cys308/Cys311. 325–337 (KMRKKRNSKMYLK) contributes to the heparin binding site. A PLAT domain is found at 347-482 (YHYQLKVHMF…SPGQELWFHK (136 aa)). Residues Asn359 and Asn393 are each glycosylated (N-linked (GlcNAc...) asparagine). Cys463 and Cys483 are joined by a disulfide. Residue Asn491 is glycosylated (N-linked (GlcNAc...) asparagine).

This sequence belongs to the AB hydrolase superfamily. Lipase family. As to quaternary structure, head to tail homodimer. Expressed in placenta, lung, liver, testis and spleen.

Its subcellular location is the secreted. The catalysed reaction is a triacylglycerol + H2O = a diacylglycerol + a fatty acid + H(+). It carries out the reaction a 1,2-diacyl-sn-glycero-3-phosphocholine + H2O = a 2-acyl-sn-glycero-3-phosphocholine + a fatty acid + H(+). It catalyses the reaction 1,2,3-tri-(9Z-octadecenoyl)-glycerol + H2O = di-(9Z)-octadecenoylglycerol + (9Z)-octadecenoate + H(+). The enzyme catalyses 1,2,3-tributanoylglycerol + H2O = dibutanoylglycerol + butanoate + H(+). The catalysed reaction is 1,2-dihexadecanoyl-sn-glycero-3-phosphocholine + H2O = hexadecanoyl-sn-glycero-3-phosphocholine + hexadecanoate + H(+). Its function is as follows. Exerts both phospholipase and triglyceride lipase activities. More active as a phospholipase than a triglyceride lipase. Hydrolyzes triglycerides, both with short-chain fatty acyl groups (tributyrin) and long-chain fatty acyl groups (triolein) with similar levels of activity toward both types of substrates. Hydrolyzes high density lipoproteins (HDL) more efficiently than other lipoproteins. The sequence is that of Endothelial lipase (Lipg) from Mus musculus (Mouse).